The following is a 732-amino-acid chain: uncharacterized protein (732 aa).

One can recognise a TR mART core domain in the interval Tyr-163–Glu-390. Active-site residues include Arg-285, Ser-309, and Glu-354.

This is an uncharacterized protein from Acanthamoeba polyphaga mimivirus (APMV).